A 651-amino-acid polypeptide reads, in one-letter code: 120 kDa Glycoprotein O (651 aa).

Positions 1 to 56 (MHLEVIVQSYKKSKYYFSHTFYLYKFIVVNSPDMLHISQLGLFLGLFAIVMHSANL) are cleaved as a signal peptide. 7 N-linked (GlcNAc...) asparagine; by host glycosylation sites follow: asparagine 74, asparagine 97, asparagine 147, asparagine 208, asparagine 223, asparagine 234, and asparagine 254. Residues 275 to 292 (SSTSASLTSPHIPSTNIP) are compositionally biased toward low complexity. A disordered region spans residues 275–303 (SSTSASLTSPHIPSTNIPTPEPPPVTKNS). Asparagine 302, asparagine 355, asparagine 378, asparagine 395, asparagine 469, asparagine 502, asparagine 520, asparagine 546, asparagine 603, asparagine 620, and asparagine 631 each carry an N-linked (GlcNAc...) asparagine; by host glycan.

The protein belongs to the herpesviridae U47 family. In terms of assembly, part of a gH-gL-gO complex. A shorter mature protein, gO-80K, is produced probably by proteolytic cleavage. In terms of processing, modified with high mannose-oligosaccharides. Post-translationally, N-glycosylated with complex glycans.

It localises to the virion. It is found in the host cell membrane. The chain is 120 kDa Glycoprotein O (U47) from Homo sapiens (Human).